Here is a 503-residue protein sequence, read N- to C-terminus: Zinc metalloproteinase nas-14 (503 aa).

Residues 1 to 25 (MRLLYSLFHCSAFLVGFTLSVGVLP) form the signal peptide. The Peptidase M12A domain maps to 116–312 (NLVTYPDKLW…KKVNKLYQCG (197 aa)). Cystine bridges form between C158–C311 and C182–C202. An N-linked (GlcNAc...) asparagine glycan is attached at N192. H210 contacts Zn(2+). E211 is a catalytic residue. Residues H214 and H220 each coordinate Zn(2+). The span at 317–340 (TSSTTTTTTTTTTTTTTEEPTTTT) shows a compositional bias: low complexity. Positions 317–377 (TSSTTTTTTT…TPKPVERSRN (61 aa)) are disordered. The span at 342 to 351 (VEEKPKDKKV) shows a compositional bias: basic and acidic residues. Over residues 352-370 (SSTTTTTKKPTTTTTTTPK) the composition is skewed to low complexity. Disulfide bonds link C380-C414, C387-C407, and C396-C411. The ShKT 1 domain maps to 380–414 (CEDLNAHCGMWEQLGHCQHSVKYMAHYCRKACNLC). The disordered stretch occupies residues 422-464 (TTTTPKPVPRNKEKENKSASSTTRGTSTATSTTPKTTTTTTSA). N437 carries N-linked (GlcNAc...) asparagine glycosylation. The span at 439–464 (SASSTTRGTSTATSTTPKTTTTTTSA) shows a compositional bias: low complexity. 3 disulfide bridges follow: C469–C503, C476–C496, and C485–C500. A ShKT 2 domain is found at 469 to 503 (CEDKNLFCSYWAKIGECNSESKFMKIFCKASCGKC).

The cofactor is Zn(2+). In terms of tissue distribution, expressed in pharyngeal muscles and mc cells.

It localises to the secreted. Functionally, metalloprotease. This is Zinc metalloproteinase nas-14 (nas-14) from Caenorhabditis elegans.